A 171-amino-acid chain; its full sequence is 3-hydroxydecanoyl-[acyl-carrier-protein] dehydratase (171 aa).

Histidine 70 is a catalytic residue.

It belongs to the thioester dehydratase family. FabA subfamily. In terms of assembly, homodimer.

The protein resides in the cytoplasm. The enzyme catalyses a (3R)-hydroxyacyl-[ACP] = a (2E)-enoyl-[ACP] + H2O. The catalysed reaction is (3R)-hydroxydecanoyl-[ACP] = (2E)-decenoyl-[ACP] + H2O. It carries out the reaction (2E)-decenoyl-[ACP] = (3Z)-decenoyl-[ACP]. It participates in lipid metabolism; fatty acid biosynthesis. In terms of biological role, necessary for the introduction of cis unsaturation into fatty acids. Catalyzes the dehydration of (3R)-3-hydroxydecanoyl-ACP to E-(2)-decenoyl-ACP and then its isomerization to Z-(3)-decenoyl-ACP. Can catalyze the dehydratase reaction for beta-hydroxyacyl-ACPs with saturated chain lengths up to 16:0, being most active on intermediate chain length. This chain is 3-hydroxydecanoyl-[acyl-carrier-protein] dehydratase, found in Chromohalobacter salexigens (strain ATCC BAA-138 / DSM 3043 / CIP 106854 / NCIMB 13768 / 1H11).